Reading from the N-terminus, the 109-residue chain is uncharacterized protein (109 aa).

The signal sequence occupies residues 1-19 (MKKFALLAGLFVFAPMTWA).

This is an uncharacterized protein from Escherichia coli O6:H1 (strain CFT073 / ATCC 700928 / UPEC).